A 495-amino-acid chain; its full sequence is Aspartyl/glutamyl-tRNA(Asn/Gln) amidotransferase subunit B (495 aa).

This sequence belongs to the GatB/GatE family. GatB subfamily. In terms of assembly, heterotrimer of A, B and C subunits.

The catalysed reaction is L-glutamyl-tRNA(Gln) + L-glutamine + ATP + H2O = L-glutaminyl-tRNA(Gln) + L-glutamate + ADP + phosphate + H(+). It catalyses the reaction L-aspartyl-tRNA(Asn) + L-glutamine + ATP + H2O = L-asparaginyl-tRNA(Asn) + L-glutamate + ADP + phosphate + 2 H(+). In terms of biological role, allows the formation of correctly charged Asn-tRNA(Asn) or Gln-tRNA(Gln) through the transamidation of misacylated Asp-tRNA(Asn) or Glu-tRNA(Gln) in organisms which lack either or both of asparaginyl-tRNA or glutaminyl-tRNA synthetases. The reaction takes place in the presence of glutamine and ATP through an activated phospho-Asp-tRNA(Asn) or phospho-Glu-tRNA(Gln). The chain is Aspartyl/glutamyl-tRNA(Asn/Gln) amidotransferase subunit B from Prochlorococcus marinus (strain MIT 9313).